The sequence spans 385 residues: Meiotic recombination protein SPO11-2 (385 aa).

Residues 24 to 169 (LPPAEVRARI…LGIMASSRGA (146 aa)) form the Topo IIA-type catalytic domain. Y126 functions as the O-(5'-phospho-DNA)-tyrosine intermediate in the catalytic mechanism. Positions 219 and 272 each coordinate Mg(2+).

This sequence belongs to the TOP6A family. Interacts with TOP6B. Mg(2+) serves as cofactor. Highly expressed in flowers before pollination. Expressed in roots and shoots.

Its subcellular location is the nucleus. It catalyses the reaction ATP-dependent breakage, passage and rejoining of double-stranded DNA.. In terms of biological role, required for meiotic recombination. Mediates DNA cleavage that forms the double-strand breaks (DSB) that initiate meiotic recombination. This is Meiotic recombination protein SPO11-2 (SPO11-2) from Oryza sativa subsp. indica (Rice).